We begin with the raw amino-acid sequence, 127 residues long: Large ribosomal subunit protein bL12 (127 aa).

It belongs to the bacterial ribosomal protein bL12 family. In terms of assembly, homodimer. Part of the ribosomal stalk of the 50S ribosomal subunit. Forms a multimeric L10(L12)X complex, where L10 forms an elongated spine to which 2 to 4 L12 dimers bind in a sequential fashion. Binds GTP-bound translation factors.

Forms part of the ribosomal stalk which helps the ribosome interact with GTP-bound translation factors. Is thus essential for accurate translation. In Streptomyces virginiae (Streptomyces cinnamonensis), this protein is Large ribosomal subunit protein bL12.